The primary structure comprises 183 residues: Adenine phosphoribosyltransferase (183 aa).

The protein belongs to the purine/pyrimidine phosphoribosyltransferase family. Homodimer.

It is found in the cytoplasm. It catalyses the reaction AMP + diphosphate = 5-phospho-alpha-D-ribose 1-diphosphate + adenine. The protein operates within purine metabolism; AMP biosynthesis via salvage pathway; AMP from adenine: step 1/1. Functionally, catalyzes a salvage reaction resulting in the formation of AMP, that is energically less costly than de novo synthesis. This chain is Adenine phosphoribosyltransferase, found in Erwinia tasmaniensis (strain DSM 17950 / CFBP 7177 / CIP 109463 / NCPPB 4357 / Et1/99).